We begin with the raw amino-acid sequence, 423 residues long: Flavohemoprotein B (423 aa).

Residues 1–136 (MLSQKSIQII…VAQAFMDAEE (136 aa)) form the Globin domain. His83 provides a ligand contact to heme b. Active-site charge relay system residues include Tyr93 and Glu135. The interval 149–423 (WKDTREFVVD…LRGVKNIIEN (275 aa)) is reductase. An FAD-binding FR-type domain is found at 150 to 268 (KDTREFVVDR…SVPAGDFVVN (119 aa)). Residues Tyr188 and 212–215 (RHYS) contribute to the FAD site. An NADP(+)-binding site is contributed by 281-286 (GVGINP). Position 400–403 (400–403 (LFGP)) interacts with FAD.

Belongs to the globin family. Two-domain flavohemoproteins subfamily. This sequence in the C-terminal section; belongs to the flavoprotein pyridine nucleotide cytochrome reductase family. FAD serves as cofactor. The cofactor is heme b.

It localises to the cytoplasm. The catalysed reaction is 2 nitric oxide + NADPH + 2 O2 = 2 nitrate + NADP(+) + H(+). The enzyme catalyses 2 nitric oxide + NADH + 2 O2 = 2 nitrate + NAD(+) + H(+). Functionally, is involved in NO detoxification in an aerobic process, termed nitric oxide dioxygenase (NOD) reaction that utilizes O(2) and NAD(P)H to convert NO to nitrate, which protects the cell from various noxious nitrogen compounds. Therefore, plays a central role in the inducible response to nitrosative stress. In terms of biological role, in the presence of oxygen and NADH, it has NADH oxidase activity, which leads to the generation of superoxide and H(2)O(2). Under anaerobic conditions, it also exhibits nitric oxide reductase and FAD reductase activities. However, all these reactions are much lower than NOD activity. The sequence is that of Flavohemoprotein B (fhbB) from Dictyostelium discoideum (Social amoeba).